A 483-amino-acid polypeptide reads, in one-letter code: Aspartyl/glutamyl-tRNA(Asn/Gln) amidotransferase subunit B (483 aa).

It belongs to the GatB/GatE family. GatB subfamily. Heterotrimer of A, B and C subunits.

It carries out the reaction L-glutamyl-tRNA(Gln) + L-glutamine + ATP + H2O = L-glutaminyl-tRNA(Gln) + L-glutamate + ADP + phosphate + H(+). It catalyses the reaction L-aspartyl-tRNA(Asn) + L-glutamine + ATP + H2O = L-asparaginyl-tRNA(Asn) + L-glutamate + ADP + phosphate + 2 H(+). Its function is as follows. Allows the formation of correctly charged Asn-tRNA(Asn) or Gln-tRNA(Gln) through the transamidation of misacylated Asp-tRNA(Asn) or Glu-tRNA(Gln) in organisms which lack either or both of asparaginyl-tRNA or glutaminyl-tRNA synthetases. The reaction takes place in the presence of glutamine and ATP through an activated phospho-Asp-tRNA(Asn) or phospho-Glu-tRNA(Gln). This Marinobacter nauticus (strain ATCC 700491 / DSM 11845 / VT8) (Marinobacter aquaeolei) protein is Aspartyl/glutamyl-tRNA(Asn/Gln) amidotransferase subunit B.